A 515-amino-acid chain; its full sequence is Kelch repeat protein M-T8 (515 aa).

A BTB domain is found at 16–82 (CDVEIVAEGK…MYTESIELHK (67 aa)). Kelch repeat units follow at residues 280 to 326 (VLYF…AIGG), 328 to 374 (IYII…CYKN), 376 to 423 (IWVL…VYKE), 424 to 471 (RLYC…VYND), and 473 to 512 (LYVFGGTDTFTSERYNGVIWKRANDVSCHFATMNAAYATY).

The protein belongs to the poxviruses Kelch family.

The polypeptide is Kelch repeat protein M-T8 (Oryctolagus cuniculus (Rabbit)).